Here is a 285-residue protein sequence, read N- to C-terminus: RNA polymerase sigma factor RpoH (285 aa).

A sigma-70 factor domain-2 region spans residues 53–122; that stretch reads LILSHLRFVV…IHEYVLRNWR (70 aa). The Interaction with polymerase core subunit RpoC motif lies at 77-80; sequence DLIQ. The sigma-70 factor domain-4 stretch occupies residues 229–281; sequence AMEGLDERSQDIIRARWLDEDNKSTLQELADRYGVSAERVRQLEKNAMKKLRA. The segment at residues 254-273 is a DNA-binding region (H-T-H motif); the sequence is LQELADRYGVSAERVRQLEK.

The protein belongs to the sigma-70 factor family. RpoH subfamily. In terms of assembly, interacts with the RNA polymerase core enzyme.

It is found in the cytoplasm. In terms of biological role, sigma factors are initiation factors that promote the attachment of RNA polymerase to specific initiation sites and are then released. This sigma factor is involved in regulation of expression of heat shock genes. This chain is RNA polymerase sigma factor RpoH, found in Enterobacter cloacae.